A 621-amino-acid chain; its full sequence is Chaperone protein HscA homolog (621 aa).

This sequence belongs to the heat shock protein 70 family.

Its function is as follows. Chaperone involved in the maturation of iron-sulfur cluster-containing proteins. Has a low intrinsic ATPase activity which is markedly stimulated by HscB. This Ralstonia pickettii (strain 12J) protein is Chaperone protein HscA homolog.